The sequence spans 492 residues: MKKAILSVSNKTGIVEFAKALTQLNYELYSTGGTKRILDEANVPVRSVSDLTHFPEIMDGRVKTLHPAVHGGILADRNKPQHLNELSEQHIDLIDMVVVNLYPFQQTVANPDVTMDEAIENIDIGGPTMLRAAAKNYKHVTTIVHPADYQEVLTRLRNDSLDESYRQSLMIKVFEHTAEYDEAIVRFFKGDKETLRYGENPQQSAYFVRTSNAKHTIAGAKQLHGKQLSYNNIKDADATLALVKKFDTPATVAVKHMNPCGVGIGDTIEQAFQHAYEADSQSIFGGIVALNRAVTPELAEQLHSIFLEVIIAPKFTDEALDILKQKKNVRLLEIDMTIDSNEEEFVSVSGGYLVQDKDNYVVPKEEMKVVTEVAPTDEQWEAMLLGWKVVPSVKSNAIILSNNKQTVGIGAGQMNRVGAAKIALERAIEINDHVALVSDGFFPMGDTVELAAQHGIKAIIQPSGSIKDQDSIDMANKHGIAMVVTGTRHFKH.

Residues 1-144 (MKKAILSVSN…KNYKHVTTIV (144 aa)) form the MGS-like domain.

It belongs to the PurH family.

It catalyses the reaction (6R)-10-formyltetrahydrofolate + 5-amino-1-(5-phospho-beta-D-ribosyl)imidazole-4-carboxamide = 5-formamido-1-(5-phospho-D-ribosyl)imidazole-4-carboxamide + (6S)-5,6,7,8-tetrahydrofolate. The catalysed reaction is IMP + H2O = 5-formamido-1-(5-phospho-D-ribosyl)imidazole-4-carboxamide. Its pathway is purine metabolism; IMP biosynthesis via de novo pathway; 5-formamido-1-(5-phospho-D-ribosyl)imidazole-4-carboxamide from 5-amino-1-(5-phospho-D-ribosyl)imidazole-4-carboxamide (10-formyl THF route): step 1/1. The protein operates within purine metabolism; IMP biosynthesis via de novo pathway; IMP from 5-formamido-1-(5-phospho-D-ribosyl)imidazole-4-carboxamide: step 1/1. This is Bifunctional purine biosynthesis protein PurH from Staphylococcus aureus (strain USA300).